Consider the following 92-residue polypeptide: Small ribosomal subunit protein bS18 (92 aa).

This sequence belongs to the bacterial ribosomal protein bS18 family. As to quaternary structure, part of the 30S ribosomal subunit. Forms a tight heterodimer with protein bS6.

In terms of biological role, binds as a heterodimer with protein bS6 to the central domain of the 16S rRNA, where it helps stabilize the platform of the 30S subunit. The chain is Small ribosomal subunit protein bS18 from Pelagibacter ubique (strain HTCC1062).